Consider the following 152-residue polypeptide: Superoxide dismutase [Cu-Zn] (152 aa).

Cu cation contacts are provided by histidine 45, histidine 47, and histidine 62. An intrachain disulfide couples cysteine 56 to cysteine 145. Residues histidine 62, histidine 70, histidine 79, and aspartate 82 each contribute to the Zn(2+) site. Position 119 (histidine 119) interacts with Cu cation.

The protein belongs to the Cu-Zn superoxide dismutase family. In terms of assembly, homodimer. The cofactor is Cu cation. Requires Zn(2+) as cofactor.

The protein localises to the cytoplasm. The catalysed reaction is 2 superoxide + 2 H(+) = H2O2 + O2. Its function is as follows. Destroys radicals which are normally produced within the cells and which are toxic to biological systems. The protein is Superoxide dismutase [Cu-Zn] (SODCC) of Nicotiana plumbaginifolia (Leadwort-leaved tobacco).